Here is a 420-residue protein sequence, read N- to C-terminus: Serine palmitoyltransferase (420 aa).

A compositionally biased stretch (polar residues) spans 1 to 21 (MKHNLQDNLQGEQMANTNSNG). A disordered region spans residues 1–25 (MKHNLQDNLQGEQMANTNSNGGKKP). Residues 132-133 (GM), H233, T261, and S263 contribute to the pyridoxal 5'-phosphate site. K264 is modified (N6-(pyridoxal phosphate)lysine).

It belongs to the class-II pyridoxal-phosphate-dependent aminotransferase family. As to quaternary structure, homodimer. Pyridoxal 5'-phosphate serves as cofactor.

It localises to the cytoplasm. The protein resides in the cell inner membrane. The catalysed reaction is L-serine + hexadecanoyl-CoA + H(+) = 3-oxosphinganine + CO2 + CoA. Its pathway is lipid metabolism; sphingolipid metabolism. Its activity is regulated as follows. Significantly inhibited by palmitoyl-CoA concentrations greater than 100 uM. Catalyzes the condensation of L-serine with palmitoyl-CoA (hexadecanoyl-CoA) to produce 3-oxosphinganine. The protein is Serine palmitoyltransferase of Bacteriovorax stolpii (Bdellovibrio stolpii).